Reading from the N-terminus, the 283-residue chain is Phosphatidylglycerol--prolipoprotein diacylglyceryl transferase (283 aa).

Helical transmembrane passes span 17–37 (LAVRWYALSYILGFILFTFLG), 56–76 (FLTWGILGVILGGRLGYVLFY), 92–112 (WEGGMSFHGGFLGVVIAIWLF), and 117–137 (GIGFLKLMDTVAPLVPLGLAS). Arg-139 is an a 1,2-diacyl-sn-glycero-3-phospho-(1'-sn-glycerol) binding site. Transmembrane regions (helical) follow at residues 194–214 (PSQLYQFALEGICLFAVVWLF), 222–242 (GQVASLFLGGYGIFRFIAEFA), and 255–275 (GLSMGQWLSVPMIVLGIVGFV).

This sequence belongs to the Lgt family.

It localises to the cell inner membrane. The catalysed reaction is L-cysteinyl-[prolipoprotein] + a 1,2-diacyl-sn-glycero-3-phospho-(1'-sn-glycerol) = an S-1,2-diacyl-sn-glyceryl-L-cysteinyl-[prolipoprotein] + sn-glycerol 1-phosphate + H(+). It functions in the pathway protein modification; lipoprotein biosynthesis (diacylglyceryl transfer). Its function is as follows. Catalyzes the transfer of the diacylglyceryl group from phosphatidylglycerol to the sulfhydryl group of the N-terminal cysteine of a prolipoprotein, the first step in the formation of mature lipoproteins. The sequence is that of Phosphatidylglycerol--prolipoprotein diacylglyceryl transferase from Neisseria meningitidis serogroup C / serotype 2a (strain ATCC 700532 / DSM 15464 / FAM18).